The following is a 740-amino-acid chain: Alpha-1,6-mannosylglycoprotein 6-beta-N-acetylglucosaminyltransferase A (740 aa).

Over 1–13 (MAFFSPWKLSSQK) the chain is Cytoplasmic. Residues 14-30 (LGFFLVTFGFIWGMMLL) form a helical; Signal-anchor for type II membrane protein membrane-spanning segment. Over 31-740 (HFTIQQRTQP…GQVALCKDCL (710 aa)) the chain is Lumenal. Residues asparagine 109, asparagine 114, and asparagine 117 are each glycosylated (N-linked (GlcNAc...) asparagine). Disulfide bonds link cysteine 144–cysteine 182, cysteine 155–cysteine 195, cysteine 171–cysteine 337, cysteine 371–cysteine 625, cysteine 648–cysteine 723, cysteine 652–cysteine 725, cysteine 659–cysteine 712, cysteine 680–cysteine 701, and cysteine 736–cysteine 739. Positions 212-740 (NSLAEIRTDF…GQVALCKDCL (529 aa)) are sufficient for catalytic activity. Asparagine 333 carries an N-linked (GlcNAc...) asparagine glycan. 377 to 378 (DS) serves as a coordination point for substrate. Asparagine 432 and asparagine 446 each carry an N-linked (GlcNAc...) asparagine glycan. Glutamate 525 serves as a coordination point for UDP-N-acetyl-alpha-D-glucosamine. Lysine 553 lines the substrate pocket.

The protein belongs to the glycosyltransferase 18 family. In terms of processing, N-glycosylated. A secreted form is released from the membrane after cleavage by gamma-secretase. Detected in cerebellum.

The protein localises to the golgi apparatus membrane. It localises to the perikaryon. Its subcellular location is the secreted. The enzyme catalyses N(4)-{beta-D-GlcNAc-(1-&gt;2)-[beta-D-GlcNAc-(1-&gt;4)]-alpha-D-Man-(1-&gt;3)-[beta-D-GlcNAc-(1-&gt;2)-alpha-D-Man-(1-&gt;6)]-beta-D-Man-(1-&gt;4)-beta-D-GlcNAc-(1-&gt;4)-beta-D-GlcNAc}-L-asparaginyl-[protein] + UDP-N-acetyl-alpha-D-glucosamine = N(4)-{beta-D-GlcNAc-(1-&gt;2)-[beta-D-GlcNAc-(1-&gt;4)]-alpha-D-Man-(1-&gt;3)-[beta-D-GlcNAc-(1-&gt;2)-[beta-D-GlcNAc-(1-&gt;6)]-alpha-D-Man-(1-&gt;6)]-beta-D-Man-(1-&gt;4)-beta-D-GlcNAc-(1-&gt;4)-beta-D-GlcNAc}-L-asparaginyl-[protein] + UDP + H(+). The protein operates within protein modification; protein glycosylation. Catalyzes the addition of N-acetylglucosamine (GlcNAc) in beta 1-6 linkage to the alpha-linked mannose of biantennary N-linked oligosaccharides. Catalyzes an important step in the biosynthesis of branched, complex-type N-glycans, such as those found on EGFR, TGFR (TGF-beta receptor) and CDH2. Via its role in the biosynthesis of complex N-glycans, plays an important role in the activation of cellular signaling pathways, reorganization of the actin cytoskeleton, cell-cell adhesion and cell migration. MGAT5-dependent EGFR N-glycosylation enhances the interaction between EGFR and LGALS3 and thereby prevents rapid EGFR endocytosis and prolongs EGFR signaling. Required for efficient interaction between TGFB1 and its receptor. Enhances activation of intracellular signaling pathways by several types of growth factors, including FGF2, PDGF, IGF, TGFB1 and EGF. MGAT5-dependent CDH2 N-glycosylation inhibits CDH2-mediated homotypic cell-cell adhesion and contributes to the regulation of downstream signaling pathways. Promotes cell migration. Contributes to the regulation of the inflammatory response. MGAT5-dependent TCR N-glycosylation enhances the interaction between TCR and LGALS3, limits agonist-induced TCR clustering, and thereby dampens TCR-mediated responses to antigens. Required for normal leukocyte evasation and accumulation at sites of inflammation. Inhibits attachment of monocytes to the vascular endothelium and subsequent monocyte diapedesis. Its function is as follows. Promotes proliferation of umbilical vein endothelial cells and angiogenesis, at least in part by promoting the release of the growth factor FGF2 from the extracellular matrix. This is Alpha-1,6-mannosylglycoprotein 6-beta-N-acetylglucosaminyltransferase A (Mgat5) from Mus musculus (Mouse).